A 77-amino-acid chain; its full sequence is Small ribosomal subunit protein bS18 (77 aa).

The protein belongs to the bacterial ribosomal protein bS18 family. Part of the 30S ribosomal subunit. Forms a tight heterodimer with protein bS6.

Binds as a heterodimer with protein bS6 to the central domain of the 16S rRNA, where it helps stabilize the platform of the 30S subunit. The polypeptide is Small ribosomal subunit protein bS18 (Lactobacillus helveticus (strain DPC 4571)).